The chain runs to 348 residues: Alcohol dehydrogenase 2 (348 aa).

Position 2 is an N-acetylserine (serine 2). Cysteine 44 is a Zn(2+) binding site. Residues histidine 45, threonine 46, and histidine 49 each contribute to the NAD(+) site. The Zn(2+) site is built by histidine 67, glutamate 68, cysteine 98, cysteine 101, cysteine 104, cysteine 112, and cysteine 154. NAD(+) contacts are provided by glycine 181, glycine 182, leucine 183, aspartate 202, and lysine 207. Residue serine 213 is modified to Phosphoserine. Phenylalanine 222 lines the NAD(+) pocket. Position 223 is a phosphothreonine (threonine 223). Residues lysine 226 and lysine 234 each participate in a glycyl lysine isopeptide (Lys-Gly) (interchain with G-Cter in ubiquitin) cross-link. Residue valine 269 coordinates NAD(+). Serine 279 is subject to Phosphoserine. Residue lysine 287 forms a Glycyl lysine isopeptide (Lys-Gly) (interchain with G-Cter in ubiquitin) linkage. NAD(+)-binding residues include serine 294 and valine 296. Serine 316 is subject to Phosphoserine. Lysine 319 is covalently cross-linked (Glycyl lysine isopeptide (Lys-Gly) (interchain with G-Cter in ubiquitin)). An NAD(+)-binding site is contributed by arginine 341.

It belongs to the zinc-containing alcohol dehydrogenase family. In terms of assembly, homotetramer. The cofactor is Zn(2+).

The protein resides in the cytoplasm. It catalyses the reaction a primary alcohol + NAD(+) = an aldehyde + NADH + H(+). It carries out the reaction a secondary alcohol + NAD(+) = a ketone + NADH + H(+). The catalysed reaction is ethanol + NAD(+) = acetaldehyde + NADH + H(+). The enzyme catalyses butan-1-ol + NAD(+) = butanal + NADH + H(+). It catalyses the reaction hexan-1-ol + NAD(+) = hexanal + NADH + H(+). Its function is as follows. Preferentially oxidative, glucose-repressed isozyme that catalyzes the conversion of ethanol to acetaldehyde. Main enzyme involved in ethanol consumption. Acts on a variety of primary unbranched aliphatic alcohols. Also produces ethanol from glucose, albeit less than ADH1. This Saccharomyces cerevisiae (strain ATCC 204508 / S288c) (Baker's yeast) protein is Alcohol dehydrogenase 2 (ADH2).